The following is a 792-amino-acid chain: Ribonucleoside-diphosphate reductase large subunit (792 aa).

Positions 1 to 92 (MHVIKRDGRQ…VSNLHKEAKK (92 aa)) constitute an ATP-cone domain. Residues 5-6 (KR), 11-17 (ERVMFDK), Thr53, and Asp57 each bind ATP. Residue Lys17 is modified to N6-acetyllysine. Residues Ser202 and Ser217 each coordinate GDP. A disulfide bond links Cys218 and Cys444. DTTP is bound by residues 226 to 228 (DSI), Lys243, Arg256, and 263 to 264 (AG). An N6-acetyllysine modification is found at Lys376. Ser427 serves as the catalytic Proton acceptor. Cys429 serves as the catalytic Cysteine radical intermediate. Residues Glu431 and 604–607 (TAST) each bind GDP. The active-site Proton acceptor is the Glu431. The residue at position 751 (Thr751) is a Phosphothreonine.

This sequence belongs to the ribonucleoside diphosphate reductase large chain family. As to quaternary structure, heterodimer of a large and a small subunit. Interacts with RRM2B. Interacts with AHCYL1 which inhibits its activity.

The protein localises to the cytoplasm. It carries out the reaction a 2'-deoxyribonucleoside 5'-diphosphate + [thioredoxin]-disulfide + H2O = a ribonucleoside 5'-diphosphate + [thioredoxin]-dithiol. With respect to regulation, under complex allosteric control mediated by deoxynucleoside triphosphates and ATP binding to separate specificity and activation sites on the M1 subunit. The type of nucleotide bound at the specificity site determines substrate preference. It seems probable that ATP makes the enzyme reduce CDP and UDP, dGTP favors ADP reduction and dTTP favors GDP reduction. Stimulated by ATP and inhibited by dATP binding to the activity site, the dATP inhibition is mediated by AHCYL1 which stabilizes dATP in the site. Functionally, provides the precursors necessary for DNA synthesis. Catalyzes the biosynthesis of deoxyribonucleotides from the corresponding ribonucleotides. The chain is Ribonucleoside-diphosphate reductase large subunit (RRM1) from Pongo abelii (Sumatran orangutan).